Reading from the N-terminus, the 357-residue chain is Tetraacyldisaccharide 4'-kinase (357 aa).

54–61 (TVGGAGKT) contributes to the ATP binding site.

The protein belongs to the LpxK family.

It carries out the reaction a lipid A disaccharide + ATP = a lipid IVA + ADP + H(+). It functions in the pathway glycolipid biosynthesis; lipid IV(A) biosynthesis; lipid IV(A) from (3R)-3-hydroxytetradecanoyl-[acyl-carrier-protein] and UDP-N-acetyl-alpha-D-glucosamine: step 6/6. Its function is as follows. Transfers the gamma-phosphate of ATP to the 4'-position of a tetraacyldisaccharide 1-phosphate intermediate (termed DS-1-P) to form tetraacyldisaccharide 1,4'-bis-phosphate (lipid IVA). This Rhizobium leguminosarum bv. trifolii (strain WSM2304) protein is Tetraacyldisaccharide 4'-kinase.